The following is a 132-amino-acid chain: Profilin (132 aa).

The protein belongs to the profilin family. In terms of assembly, occurs in many kinds of cells as a complex with monomeric actin in a 1:1 ratio.

The protein resides in the cytoplasm. Its subcellular location is the cytoskeleton. In terms of biological role, binds to actin and affects the structure of the cytoskeleton. At high concentrations, profilin prevents the polymerization of actin, whereas it enhances it at low concentrations. By binding to PIP2, it inhibits the formation of IP3 and DG. The chain is Profilin from Naegleria pringsheimi (Amoeba).